We begin with the raw amino-acid sequence, 377 residues long: uncharacterized protein (377 aa).

Residues 21–43 (YFISFSALFLIAYMFVAAVPLGA) traverse the membrane as a helical segment.

Its subcellular location is the membrane. This is an uncharacterized protein from Treponema pallidum (strain Nichols).